Consider the following 531-residue polypeptide: Putative UDP-glucuronosyltransferase ugt-46 (531 aa).

An N-terminal signal peptide occupies residues methionine 1–serine 17. Asparagine 304 carries N-linked (GlcNAc...) asparagine glycosylation. Residues valine 493–tyrosine 513 traverse the membrane as a helical segment.

Belongs to the UDP-glycosyltransferase family.

The protein localises to the membrane. It carries out the reaction glucuronate acceptor + UDP-alpha-D-glucuronate = acceptor beta-D-glucuronoside + UDP + H(+). The polypeptide is Putative UDP-glucuronosyltransferase ugt-46 (ugt-46) (Caenorhabditis elegans).